The chain runs to 858 residues: Ubiquitin carboxyl-terminal hydrolase 5 (858 aa).

The residue at position 2 (alanine 2) is an N-acetylalanine. The tract at residues 73–98 (LRRTRRPKEEDTSAGTGDPPRKKPTR) is disordered. Lysine 113 is covalently cross-linked (Glycyl lysine isopeptide (Lys-Gly) (interchain with G-Cter in SUMO)). Phosphoserine occurs at positions 149 and 156. The UBP-type; degenerate zinc-finger motif lies at 175-283 (QVSKHAFNLK…EHLSHFGIDM (109 aa)). A disulfide bond links cysteine 195 and cysteine 816. 2 residues coordinate Zn(2+): cysteine 199 and cysteine 202. Position 209 (tryptophan 209) interacts with substrate. Zn(2+) is bound at residue cysteine 219. 221 to 224 (RRYF) lines the substrate pocket. Histidine 232 serves as a coordination point for Zn(2+). The substrate site is built by tyrosine 259, tyrosine 261, and aspartate 264. Threonine 292 carries the post-translational modification Phosphothreonine. The USP domain maps to 326–856 (TGIRNLGNSC…LGYIYFYQRV (531 aa)). Cysteine 335 (nucleophile) is an active-site residue. The residue at position 623 (threonine 623) is a Phosphothreonine. 2 consecutive UBA domains span residues 654–695 (MLDE…VMSH) and 722–762 (PPPE…IFSH). 3 positions are modified to phosphoserine: serine 779, serine 783, and serine 785. Histidine 818 acts as the Proton acceptor in catalysis.

Belongs to the peptidase C19 family. In terms of assembly, homodimer. Interacts with TRIML1. SUMOylated at Lys-113; SUMOylation affects the interaction with Cav3.2 channels. Post-translationally, ubiquitinated by SMURF1; leading to proteasomal degradation.

The protein localises to the cytoplasm. The protein resides in the stress granule. Its subcellular location is the nucleus. The catalysed reaction is Thiol-dependent hydrolysis of ester, thioester, amide, peptide and isopeptide bonds formed by the C-terminal Gly of ubiquitin (a 76-residue protein attached to proteins as an intracellular targeting signal).. Deubiquitinating enzyme that participates in a wide range of cellular processes by specifically cleaving isopeptide bonds between ubiquitin and substrate proteins or ubiquitin itself. Affects thereby important cellular signaling pathways such as NF-kappa-B, Wnt/beta-catenin, and cytokine production by regulating ubiquitin-dependent protein degradation. Participates in the activation of the Wnt signaling pathway by promoting FOXM1 deubiquitination and stabilization that induces the recruitment of beta-catenin to Wnt target gene promoter. Regulates the assembly and disassembly of heat-induced stress granules by mediating the hydrolysis of unanchored ubiquitin chains. Promotes lipopolysaccharide-induced apoptosis and inflammatory response by stabilizing the TXNIP protein. Affects T-cell biology by stabilizing the inhibitory receptor on T-cells PDC1. Acts as a negative regulator of autophagy by regulating ULK1 at both protein and mRNA levels. Acts also as a negative regulator of type I interferon production by simultaneously removing both 'Lys-48'-linked unanchored and 'Lys-63'-linked anchored polyubiquitin chains on the transcription factor IRF3. Modulates the stability of DNA mismatch repair protein MLH1 and counteracts the effect of the ubiquitin ligase UBR4. Upon activation by insulin, it gets phosphorylated through mTORC1-mediated phosphorylation to enhance YTHDF1 stability by removing 'Lys-11'-linked polyubiquitination. May also deubiquitinate other substrates such as the calcium channel CACNA1H. The sequence is that of Ubiquitin carboxyl-terminal hydrolase 5 (Usp5) from Mus musculus (Mouse).